A 223-amino-acid polypeptide reads, in one-letter code: UPF0441 protein YgiB (223 aa).

The tract at residues 201–223 is disordered; it reads ESVAKQSAMQRSAAGTSTRSMGG. Positions 204-223 are enriched in polar residues; the sequence is AKQSAMQRSAAGTSTRSMGG.

Belongs to the UPF0441 family.

The chain is UPF0441 protein YgiB from Salmonella arizonae (strain ATCC BAA-731 / CDC346-86 / RSK2980).